Here is a 347-residue protein sequence, read N- to C-terminus: Phosphoribosylformylglycinamidine cyclo-ligase (347 aa).

It belongs to the AIR synthase family.

The protein resides in the cytoplasm. The enzyme catalyses 2-formamido-N(1)-(5-O-phospho-beta-D-ribosyl)acetamidine + ATP = 5-amino-1-(5-phospho-beta-D-ribosyl)imidazole + ADP + phosphate + H(+). It functions in the pathway purine metabolism; IMP biosynthesis via de novo pathway; 5-amino-1-(5-phospho-D-ribosyl)imidazole from N(2)-formyl-N(1)-(5-phospho-D-ribosyl)glycinamide: step 2/2. The chain is Phosphoribosylformylglycinamidine cyclo-ligase from Yersinia enterocolitica serotype O:8 / biotype 1B (strain NCTC 13174 / 8081).